A 392-amino-acid chain; its full sequence is Probable nucleoredoxin 3 (392 aa).

2 consecutive Thioredoxin domains span residues 17-171 (LYSI…DSKR) and 177-326 (EKLL…ELKA).

It belongs to the nucleoredoxin family.

It catalyses the reaction [protein]-dithiol + NAD(+) = [protein]-disulfide + NADH + H(+). It carries out the reaction [protein]-dithiol + NADP(+) = [protein]-disulfide + NADPH + H(+). Its function is as follows. Probable thiol-disulfide oxidoreductase that may participate in various redox reactions. The chain is Probable nucleoredoxin 3 from Arabidopsis thaliana (Mouse-ear cress).